The following is a 458-amino-acid chain: Mitochondrial-processing peptidase subunit beta (458 aa).

Residues 1 to 41 (MYRRLASGLYQTSQRRIAQVQPKSVFVPETIVTTLPNGFRV) constitute a mitochondrion transit peptide. A Zn(2+)-binding site is contributed by H73. The active-site Proton acceptor is E76. Residues H77 and E153 each contribute to the Zn(2+) site.

Belongs to the peptidase M16 family. As to quaternary structure, heterodimer of mppa-1 (alpha) and mppb-1 (beta) subunits, forming the mitochondrial processing protease (MPP) in which mppa-1 is involved in substrate recognition and binding and mppb-1 is the catalytic subunit. It depends on Zn(2+) as a cofactor.

Its subcellular location is the mitochondrion matrix. The enzyme catalyses Release of N-terminal transit peptides from precursor proteins imported into the mitochondrion, typically with Arg in position P2.. With respect to regulation, binding to mppa-1 is required for catalytic activity. Inhibited by metal chelator ethylenediaminetetraacetic acid (EDTA). Its function is as follows. Catalytic subunit of the essential mitochondrial processing protease (MPP), which cleaves the mitochondrial sequence off newly imported precursors proteins. Preferentially, cleaves after an arginine at position P2. This is Mitochondrial-processing peptidase subunit beta from Caenorhabditis elegans.